The following is a 279-amino-acid chain: DegV domain-containing protein SP_1112 (279 aa).

One can recognise a DegV domain in the interval 4-277; it reads IKIVTDSSVT…ENAWAILIRY (274 aa). Positions 62 and 94 each coordinate hexadecanoate.

May bind long-chain fatty acids, such as palmitate, and may play a role in lipid transport or fatty acid metabolism. The protein is DegV domain-containing protein SP_1112 of Streptococcus pneumoniae serotype 4 (strain ATCC BAA-334 / TIGR4).